The primary structure comprises 156 residues: ATP synthase subunit b (156 aa).

The helical transmembrane segment at 11-31 (AIAFILFVAFCMKYVWPPLMA) threads the bilayer.

This sequence belongs to the ATPase B chain family. F-type ATPases have 2 components, F(1) - the catalytic core - and F(0) - the membrane proton channel. F(1) has five subunits: alpha(3), beta(3), gamma(1), delta(1), epsilon(1). F(0) has three main subunits: a(1), b(2) and c(10-14). The alpha and beta chains form an alternating ring which encloses part of the gamma chain. F(1) is attached to F(0) by a central stalk formed by the gamma and epsilon chains, while a peripheral stalk is formed by the delta and b chains.

The protein localises to the cell inner membrane. F(1)F(0) ATP synthase produces ATP from ADP in the presence of a proton or sodium gradient. F-type ATPases consist of two structural domains, F(1) containing the extramembraneous catalytic core and F(0) containing the membrane proton channel, linked together by a central stalk and a peripheral stalk. During catalysis, ATP synthesis in the catalytic domain of F(1) is coupled via a rotary mechanism of the central stalk subunits to proton translocation. In terms of biological role, component of the F(0) channel, it forms part of the peripheral stalk, linking F(1) to F(0). In Erwinia tasmaniensis (strain DSM 17950 / CFBP 7177 / CIP 109463 / NCPPB 4357 / Et1/99), this protein is ATP synthase subunit b.